The following is a 274-amino-acid chain: Large ribosomal subunit protein uL2 (274 aa).

The tract at residues Arg-221–Gly-254 is disordered.

Belongs to the universal ribosomal protein uL2 family. In terms of assembly, part of the 50S ribosomal subunit. Forms a bridge to the 30S subunit in the 70S ribosome.

One of the primary rRNA binding proteins. Required for association of the 30S and 50S subunits to form the 70S ribosome, for tRNA binding and peptide bond formation. It has been suggested to have peptidyltransferase activity; this is somewhat controversial. Makes several contacts with the 16S rRNA in the 70S ribosome. The protein is Large ribosomal subunit protein uL2 of Sulfurihydrogenibium sp. (strain YO3AOP1).